The chain runs to 432 residues: Adenylosuccinate synthetase (432 aa).

GTP-binding positions include 16 to 22 (GDEGKGK) and 44 to 46 (GHM). Aspartate 17 functions as the Proton acceptor in the catalytic mechanism. Mg(2+)-binding residues include aspartate 17 and glycine 44. IMP contacts are provided by residues 17–20 (DEGK), 42–45 (NAGH), threonine 132, arginine 146, glutamine 226, threonine 241, and arginine 305. Catalysis depends on histidine 45, which acts as the Proton donor. 301–307 (LNTGRPR) provides a ligand contact to substrate. GTP is bound by residues arginine 307, 333-335 (LFD), and 415-417 (SVG).

This sequence belongs to the adenylosuccinate synthetase family. In terms of assembly, homodimer. The cofactor is Mg(2+).

It is found in the cytoplasm. The catalysed reaction is IMP + L-aspartate + GTP = N(6)-(1,2-dicarboxyethyl)-AMP + GDP + phosphate + 2 H(+). Its pathway is purine metabolism; AMP biosynthesis via de novo pathway; AMP from IMP: step 1/2. In terms of biological role, plays an important role in the de novo pathway of purine nucleotide biosynthesis. Catalyzes the first committed step in the biosynthesis of AMP from IMP. The protein is Adenylosuccinate synthetase of Mycoplasma mycoides subsp. mycoides SC (strain CCUG 32753 / NCTC 10114 / PG1).